The chain runs to 148 residues: 3-dehydroquinate dehydratase (148 aa).

Substrate is bound by residues N74, H80, and D87. The Proton donor role is filled by H100. Substrate is bound by residues 101–102 and R111; that span reads LS.

The protein belongs to the type-II 3-dehydroquinase family. In terms of assembly, homododecamer.

It catalyses the reaction 3-dehydroquinate = 3-dehydroshikimate + H2O. Its pathway is metabolic intermediate biosynthesis; chorismate biosynthesis; chorismate from D-erythrose 4-phosphate and phosphoenolpyruvate: step 3/7. The sequence is that of 3-dehydroquinate dehydratase (yqhS) from Bacillus subtilis (strain 168).